Here is a 94-residue protein sequence, read N- to C-terminus: Ferredoxin-like protein (94 aa).

4Fe-4S ferredoxin-type domains follow at residues 20–52 (PHIR…RETN) and 53–83 (GKVT…WEWP).

The protein to ferredoxins from P.putida and C.tartarivorum, ferredoxin I from A.vinelandii, ferredoxin II from D.desulfuricans.

In terms of biological role, could be a 3Fe-4S cluster-containing protein. In Azotobacter vinelandii, this protein is Ferredoxin-like protein (fixX).